Consider the following 347-residue polypeptide: D-alanine--D-alanine ligase (347 aa).

Residues 131–333 (KRVLESAGIA…YPELIERLVD (203 aa)) form the ATP-grasp domain. ATP is bound at residue 161 to 216 (EEKLAYPVFAKPSNMGSSVGISKSENQEELRQALKLAFRYDSRVLVEQGVNAREIE). 3 residues coordinate Mg(2+): D287, E300, and N302.

The protein belongs to the D-alanine--D-alanine ligase family. Mg(2+) is required as a cofactor. The cofactor is Mn(2+).

It is found in the cytoplasm. The enzyme catalyses 2 D-alanine + ATP = D-alanyl-D-alanine + ADP + phosphate + H(+). Its pathway is cell wall biogenesis; peptidoglycan biosynthesis. Its function is as follows. Cell wall formation. The chain is D-alanine--D-alanine ligase from Streptococcus pneumoniae (strain P1031).